Reading from the N-terminus, the 75-residue chain is Exodeoxyribonuclease 7 small subunit (75 aa).

The protein belongs to the XseB family. As to quaternary structure, heterooligomer composed of large and small subunits.

The protein resides in the cytoplasm. The catalysed reaction is Exonucleolytic cleavage in either 5'- to 3'- or 3'- to 5'-direction to yield nucleoside 5'-phosphates.. Functionally, bidirectionally degrades single-stranded DNA into large acid-insoluble oligonucleotides, which are then degraded further into small acid-soluble oligonucleotides. The protein is Exodeoxyribonuclease 7 small subunit of Caldanaerobacter subterraneus subsp. tengcongensis (strain DSM 15242 / JCM 11007 / NBRC 100824 / MB4) (Thermoanaerobacter tengcongensis).